The sequence spans 1010 residues: Pre-mRNA-splicing factor cwc22 (1010 aa).

Over residues 1-10 (MASADMSPSR) the composition is skewed to polar residues. The disordered stretch occupies residues 1 to 166 (MASADMSPSR…RTPTPPPVAV (166 aa)). Over residues 18-28 (RSPSPRTQSPS) the composition is skewed to low complexity. Composition is skewed to basic and acidic residues over residues 29 to 39 (PRDEDGSRSPG) and 65 to 78 (PRRD…DQPH). Residues 84–109 (RSPTPRSQSPSRRSVRSPSPRQGSPA) are compositionally biased toward low complexity. The span at 142-158 (RHRDAGGDYRPVRKERT) shows a compositional bias: basic and acidic residues. The MIF4G domain maps to 222-405 (KKSVNGLVNK…EVLFQVRKDK (184 aa)). Positions 466 to 498 (GEASDDDEDDDDDDESESGSESEDEEQKALEIK) are disordered. Residues 468 to 491 (ASDDDEDDDDDDESESGSESEDEE) show a composition bias toward acidic residues. One can recognise an MI domain in the interval 507 to 623 (NLRRTIYLSI…GWHVFSVIHL (117 aa)). Positions 708 to 1010 (LPAPPADSDS…SPVAKRGRVD (303 aa)) are disordered. The span at 718-732 (ESVSSYSSYSSYSSR) shows a compositional bias: low complexity. The span at 753-775 (PPRRGRGRSYSRTPSRSRSRSRS) shows a compositional bias: basic residues. Over residues 776-787 (YSRSVSKSVSRS) the composition is skewed to low complexity. Basic residues-rich tracts occupy residues 834–846 (RRGR…RSRS) and 899–910 (RLRRGSYSRSRS). The segment covering 911–935 (RSPIPIRGNGPAGRDTGRAGPAPAR) has biased composition (low complexity). Residues 936–948 (GGRRNRSYSRSRT) are compositionally biased toward basic residues. A compositionally biased stretch (low complexity) spans 961–973 (SRRVVSRSPSPVV). The span at 976-1010 (NKRRRSYSSSRSRSRSSSRSRYRSRSPVAKRGRVD) shows a compositional bias: basic residues.

Belongs to the CWC22 family. In terms of assembly, associated with the spliceosome.

It is found in the cytoplasm. It localises to the nucleus. Its function is as follows. Involved in pre-mRNA splicing. This is Pre-mRNA-splicing factor cwc22 (msp-1) from Neurospora crassa (strain ATCC 24698 / 74-OR23-1A / CBS 708.71 / DSM 1257 / FGSC 987).